The chain runs to 447 residues: uncharacterized protein (447 aa).

A run of 2 helical transmembrane segments spans residues 380–400 (VLEI…LLLT) and 412–432 (ILGF…GVYV).

It localises to the cell membrane. This is an uncharacterized protein from Methanocaldococcus jannaschii (strain ATCC 43067 / DSM 2661 / JAL-1 / JCM 10045 / NBRC 100440) (Methanococcus jannaschii).